Reading from the N-terminus, the 467-residue chain is tRNA dimethylallyltransferase (467 aa).

Residues 1-47 (MASVAAARAVPVGSGLRGLQRTLPLVVILGATGTGKSTLALQLGQRL) constitute a mitochondrion transit peptide. 32-37 (TGTGKS) is a binding site for dimethylallyl diphosphate. 2 interaction with substrate tRNA regions span residues 55–58 (DSMQ) and 183–187 (RKVAR). The tract at residues 221–230 (FSNPCILWLH) is core aggregation region. The interval 233–255 (QAVLDERLDKRVDDMLAAGLLEE) is interaction with isopentenylpyrophosphate transferase. 2 interaction with substrate tRNA regions span residues 281-283 (QSI) and 313-331 (ALKQ…WVKN). A Matrin-type zinc finger spans residues 395-425 (HLCDLCDRIIIGDREWAAHIKSKSHLNQLKK). The disordered stretch occupies residues 429-467 (LDSDAVNTIESQSVSPDHNKEPKEKGSPGQNDQELKCSV). Residues 433 to 444 (AVNTIESQSVSP) show a composition bias toward polar residues. Ser-443 is subject to Phosphoserine. The segment covering 445–454 (DHNKEPKEKG) has biased composition (basic and acidic residues). A Phosphoserine modification is found at Ser-455.

The protein belongs to the IPP transferase family.

It localises to the mitochondrion. The protein localises to the cytoplasm. It carries out the reaction adenosine(37) in tRNA + dimethylallyl diphosphate = N(6)-dimethylallyladenosine(37) in tRNA + diphosphate. In terms of biological role, catalyzes the transfer of a dimethylallyl group onto the adenine at position 37 of both cytosolic and mitochondrial tRNAs, leading to the formation of N6-(dimethylallyl)adenosine (i6A37). Mediates modification of a limited subset of tRNAs: tRNA(Ser)(AGA), tRNA(Ser)(CGA), tRNA(Ser)(UGA), as well as partial modification of the selenocysteine tRNA(Ser)(UCA). TRIT1 is therefore required for selenoprotein expression. In Homo sapiens (Human), this protein is tRNA dimethylallyltransferase (TRIT1).